A 361-amino-acid chain; its full sequence is Protein SSUH2 homolog (361 aa).

It is found in the cytoplasm. Its subcellular location is the nucleus. In terms of biological role, plays a role in odontogenesis. This chain is Protein SSUH2 homolog, found in Danio rerio (Zebrafish).